The sequence spans 564 residues: Dihydroxy-acid dehydratase (564 aa).

Residue cysteine 53 coordinates [2Fe-2S] cluster. Aspartate 85 serves as a coordination point for Mg(2+). Residue cysteine 126 participates in [2Fe-2S] cluster binding. Residues aspartate 127 and lysine 128 each contribute to the Mg(2+) site. Position 128 is an N6-carboxylysine (lysine 128). Cysteine 203 contributes to the [2Fe-2S] cluster binding site. Glutamate 454 provides a ligand contact to Mg(2+). The active-site Proton acceptor is the serine 480.

It belongs to the IlvD/Edd family. Homodimer. The cofactor is [2Fe-2S] cluster. Mg(2+) is required as a cofactor.

It catalyses the reaction (2R)-2,3-dihydroxy-3-methylbutanoate = 3-methyl-2-oxobutanoate + H2O. The catalysed reaction is (2R,3R)-2,3-dihydroxy-3-methylpentanoate = (S)-3-methyl-2-oxopentanoate + H2O. It participates in amino-acid biosynthesis; L-isoleucine biosynthesis; L-isoleucine from 2-oxobutanoate: step 3/4. Its pathway is amino-acid biosynthesis; L-valine biosynthesis; L-valine from pyruvate: step 3/4. Its function is as follows. Functions in the biosynthesis of branched-chain amino acids. Catalyzes the dehydration of (2R,3R)-2,3-dihydroxy-3-methylpentanoate (2,3-dihydroxy-3-methylvalerate) into 2-oxo-3-methylpentanoate (2-oxo-3-methylvalerate) and of (2R)-2,3-dihydroxy-3-methylbutanoate (2,3-dihydroxyisovalerate) into 2-oxo-3-methylbutanoate (2-oxoisovalerate), the penultimate precursor to L-isoleucine and L-valine, respectively. The sequence is that of Dihydroxy-acid dehydratase from Mycobacterium leprae (strain TN).